The following is an 89-amino-acid chain: Small ribosomal subunit protein uS15 (89 aa).

It belongs to the universal ribosomal protein uS15 family. In terms of assembly, part of the 30S ribosomal subunit. Forms a bridge to the 50S subunit in the 70S ribosome, contacting the 23S rRNA.

In terms of biological role, one of the primary rRNA binding proteins, it binds directly to 16S rRNA where it helps nucleate assembly of the platform of the 30S subunit by binding and bridging several RNA helices of the 16S rRNA. Functionally, forms an intersubunit bridge (bridge B4) with the 23S rRNA of the 50S subunit in the ribosome. The sequence is that of Small ribosomal subunit protein uS15 from Dictyoglomus turgidum (strain DSM 6724 / Z-1310).